Reading from the N-terminus, the 902-residue chain is Zinc finger CCCH-type antiviral protein 1 (902 aa).

Position 2 is an N-acetylalanine (alanine 2). Residues 2–254 form an N-terminal domain region; that stretch reads ADPEVCCFIT…ARSKSRDRFF (253 aa). The Nuclear localization signal signature appears at 69-76; it reads RARVCRRK. 4 consecutive C3H1-type zinc fingers follow at residues 73–86, 88–110, 150–172, and 169–193; these read CRRK…DNLH, CKLN…KYSH, CKSY…SRLH, and SRLH…SHNL. Positions 221–251 are disordered; the sequence is SKHMQKNPPGPRAPSSHRRNMAYRARSKSRD. Residues 224 to 254 form a binding to EXOSC5 region; the sequence is MQKNPPGPRAPSSHRRNMAYRARSKSRDRFF. Basic residues predominate over residues 235 to 247; that stretch reads SSHRRNMAYRARS. 4 positions are modified to phosphoserine; by GSK3-beta: serine 257, serine 263, serine 267, and serine 271. Positions 265-278 are enriched in polar residues; it reads SASAERSCTPSPDQ. 2 disordered regions span residues 265 to 287 and 299 to 373; these read SASA…SLED and YLGS…GARR. Threonine 273 bears the Phosphothreonine mark. Serine 275 and serine 284 each carry phosphoserine. Residues 285–292 carry the Nuclear export signal motif; sequence LEDAPVDD. A phosphoserine mark is found at serine 302, serine 327, serine 335, serine 355, serine 378, and serine 387. Composition is skewed to polar residues over residues 310 to 336 and 344 to 369; these read SGSS…NGSQ and PGST…TNDQ. Threonine 393 is modified (phosphothreonine). 4 positions are modified to phosphoserine: serine 407, serine 469, serine 492, and serine 494. A disordered region spans residues 445–481; sequence LNYKSTSSGHREISSPRIQDAGPASRDVQATGRIADD. Position 554 is a phosphothreonine (threonine 554). A phosphoserine mark is found at tyrosine 572 and serine 590. A WWE domain is found at 594 to 681; sequence SVTKPANSVF…ASKTQKDVIR (88 aa). The 187-residue stretch at 716-902 folds into the PARP catalytic domain; the sequence is PQEDFCFLSS…YTEDKACVIS (187 aa).

The protein belongs to the ARTD/PARP family. Homodimer or homooligomer. Homooligomerization is essential for its antiviral activity. Interacts with EXOSC5. Interacts (via N-terminal domain) with DDX17 in an RNA-independent manner. Interacts with EXOSC3, EXOSC7, DCP2 and DCP1A. Interacts with PARN in an RNA-independent manner. Interacts with XRN1 in an RNA-dependent manner. Isoform 2 interacts (via zinc-fingers) with RIGI in an RNA-dependent manner. Interacts (via N-terminal domain) with DHX30 (via N-terminus) in an RNA-independent manner. Post-translationally, phosphorylation at Ser-275 is essential for sequential phosphorylation of Ser-271, Ser-267, Ser-263 and Ser-257 by GSK3-beta. Phosphorylation by GSK3-beta enhances its antiviral activity.

The protein resides in the cytoplasm. Its subcellular location is the nucleus. Antiviral protein which inhibits the replication of viruses by recruiting the cellular RNA degradation machineries to degrade the viral mRNAs. Binds to a ZAP-responsive element (ZRE) present in the target viral mRNA, recruits cellular poly(A)-specific ribonuclease PARN to remove the poly(A) tail, and the 3'-5' exoribonuclease complex exosome to degrade the RNA body from the 3'-end. It also recruits the decapping complex DCP1-DCP2 through RNA helicase p72 (DDX17) to remove the cap structure of the viral mRNA to initiate its degradation from the 5'-end. Its target viruses belong to families which include retroviridae: human immunodeficiency virus type 1 (HIV-1), moloney and murine leukemia virus (MoMLV) and xenotropic MuLV-related virus (XMRV), filoviridae: ebola virus (EBOV) and marburg virus (MARV), togaviridae: sindbis virus (SINV) and Ross river virus (RRV). Specifically targets the multiply spliced but not unspliced or singly spliced HIV-1 mRNAs for degradation. Isoform 1 is a more potent viral inhibitor than isoform 2. Isoform 2 acts as a positive regulator of RIGI signaling resulting in activation of the downstream effector IRF3 leading to the expression of type I IFNs and IFN stimulated genes (ISGs). The polypeptide is Zinc finger CCCH-type antiviral protein 1 (Homo sapiens (Human)).